Consider the following 129-residue polypeptide: Protachykinin-1 (129 aa).

The first 19 residues, 1-19 (MKILVALAVFFLVSTQLFA), serve as a signal peptide directing secretion. A propeptide spanning residues 20 to 56 (EEIGANDDLNYWSDWYDSDQIKEELPEPFEHLLQRIA) is cleaved from the precursor. Methionine amide occurs at positions 68 and 107.

This sequence belongs to the tachykinin family. Post-translationally, the substance P form is cleaved at Pro-59 by the prolyl endopeptidase FAP (seprase) activity (in vitro). Substance P is also cleaved and degraded by Angiotensin-converting enzyme (ACE) and neprilysin (MME).

The protein localises to the secreted. Its function is as follows. Tachykinins are active peptides which excite neurons, evoke behavioral responses, are potent vasodilators and secretagogues, and contract (directly or indirectly) many smooth muscles. This is Protachykinin-1 (TAC1) from Homo sapiens (Human).